A 382-amino-acid polypeptide reads, in one-letter code: Pyrimidine monooxygenase RutA (382 aa).

Residues 68–69 (IK), Asn-134, Glu-143, 159–160 (RY), and Ser-209 each bind FMN.

This sequence belongs to the NtaA/SnaA/DszA monooxygenase family. RutA subfamily.

It catalyses the reaction uracil + FMNH2 + NADH + O2 = (Z)-3-ureidoacrylate + FMN + NAD(+) + H2O + H(+). It carries out the reaction thymine + FMNH2 + NADH + O2 = (Z)-2-methylureidoacrylate + FMN + NAD(+) + H2O + H(+). Catalyzes the pyrimidine ring opening between N-3 and C-4 by an unusual flavin hydroperoxide-catalyzed mechanism, adding oxygen atoms in the process to yield ureidoacrylate peracid, that immediately reacts with FMN forming ureidoacrylate and FMN-N(5)-oxide. The FMN-N(5)-oxide reacts spontaneously with NADH to produce FMN. Requires the flavin reductase RutF to regenerate FMN in vivo. The chain is Pyrimidine monooxygenase RutA from Escherichia coli (strain SE11).